Here is a 258-residue protein sequence, read N- to C-terminus: tRNA pseudouridine synthase A (258 aa).

The Nucleophile role is filled by aspartate 52. Tyrosine 110 is a binding site for substrate.

This sequence belongs to the tRNA pseudouridine synthase TruA family. As to quaternary structure, homodimer.

The enzyme catalyses uridine(38/39/40) in tRNA = pseudouridine(38/39/40) in tRNA. Functionally, formation of pseudouridine at positions 38, 39 and 40 in the anticodon stem and loop of transfer RNAs. In Francisella tularensis subsp. tularensis (strain FSC 198), this protein is tRNA pseudouridine synthase A.